The sequence spans 165 residues: SsrA-binding protein (165 aa).

This sequence belongs to the SmpB family.

The protein resides in the cytoplasm. Its function is as follows. Required for rescue of stalled ribosomes mediated by trans-translation. Binds to transfer-messenger RNA (tmRNA), required for stable association of tmRNA with ribosomes. tmRNA and SmpB together mimic tRNA shape, replacing the anticodon stem-loop with SmpB. tmRNA is encoded by the ssrA gene; the 2 termini fold to resemble tRNA(Ala) and it encodes a 'tag peptide', a short internal open reading frame. During trans-translation Ala-aminoacylated tmRNA acts like a tRNA, entering the A-site of stalled ribosomes, displacing the stalled mRNA. The ribosome then switches to translate the ORF on the tmRNA; the nascent peptide is terminated with the 'tag peptide' encoded by the tmRNA and targeted for degradation. The ribosome is freed to recommence translation, which seems to be the essential function of trans-translation. The polypeptide is SsrA-binding protein (Ruthia magnifica subsp. Calyptogena magnifica).